The chain runs to 407 residues: uncharacterized protein (407 aa).

A run of 12 helical transmembrane segments spans residues 22-42 (IVSV…PLAV), 51-71 (LGFS…ATLA), 101-121 (ALLL…VLLV), 126-146 (VLGI…IGRV), 154-174 (VISW…PVGV), 179-199 (ALIP…GYYL), 227-247 (GLGL…ITLY), 258-278 (LSLT…ANTI), 286-306 (VAIV…LAPV), 309-329 (VALV…PALG), 347-367 (AYSV…GYVA), and 369-389 (AFGY…GVAL).

The protein belongs to the major facilitator superfamily. YhhS family.

It localises to the cell inner membrane. This is an uncharacterized protein from Burkholderia pseudomallei (strain 1106a).